The following is a 301-amino-acid chain: Homoserine kinase (301 aa).

Position 89 to 99 (89 to 99 (KPGSGLGSSSA)) interacts with ATP.

This sequence belongs to the GHMP kinase family. Homoserine kinase subfamily.

The protein localises to the cytoplasm. The catalysed reaction is L-homoserine + ATP = O-phospho-L-homoserine + ADP + H(+). Its pathway is amino-acid biosynthesis; L-threonine biosynthesis; L-threonine from L-aspartate: step 4/5. Functionally, catalyzes the ATP-dependent phosphorylation of L-homoserine to L-homoserine phosphate. The protein is Homoserine kinase of Methanococcus maripaludis (strain C5 / ATCC BAA-1333).